Here is a 213-residue protein sequence, read N- to C-terminus: Transmembrane protein 186 (213 aa).

At Met1–Thr79 the chain is on the mitochondrial matrix side. Residues Ala80–Leu100 traverse the membrane as a helical segment. At Asn101–Thr102 the chain is on the mitochondrial intermembrane side. A helical transmembrane segment spans residues Val103–Phe123. The Mitochondrial matrix portion of the chain corresponds to Leu124 to Lys213.

It belongs to the TMEM186 family. As to quaternary structure, part of the mitochondrial complex I assembly/MCIA complex that comprises at least the core subunits TMEM126B, NDUFAF1, ECSIT and ACAD9 and complement subunits such as COA1 and TMEM186. Interacts with MT-ND3.

The protein resides in the mitochondrion inner membrane. Functionally, as part of the MCIA complex, required for efficient assembly of the mitochondrial complex I. In Homo sapiens (Human), this protein is Transmembrane protein 186.